An 86-amino-acid chain; its full sequence is UPF0457 protein SERP1772 (86 aa).

This sequence belongs to the UPF0457 family.

This Staphylococcus epidermidis (strain ATCC 35984 / DSM 28319 / BCRC 17069 / CCUG 31568 / BM 3577 / RP62A) protein is UPF0457 protein SERP1772.